We begin with the raw amino-acid sequence, 858 residues long: Leucine--tRNA ligase (858 aa).

A 'HIGH' region motif is present at residues 42–52 (PYPSGRLHMGH). Positions 618 to 622 (KMSKS) match the 'KMSKS' region motif. Residue lysine 621 participates in ATP binding.

This sequence belongs to the class-I aminoacyl-tRNA synthetase family.

It localises to the cytoplasm. The enzyme catalyses tRNA(Leu) + L-leucine + ATP = L-leucyl-tRNA(Leu) + AMP + diphosphate. The polypeptide is Leucine--tRNA ligase (Aliivibrio fischeri (strain MJ11) (Vibrio fischeri)).